The sequence spans 186 residues: Peptidyl-tRNA hydrolase (186 aa).

Residue histidine 19 is the Proton acceptor of the active site. Residues phenylalanine 64, asparagine 66, and asparagine 112 each coordinate tRNA.

This sequence belongs to the PTH family. Monomer.

The protein localises to the cytoplasm. The enzyme catalyses an N-acyl-L-alpha-aminoacyl-tRNA + H2O = an N-acyl-L-amino acid + a tRNA + H(+). In terms of biological role, hydrolyzes ribosome-free peptidyl-tRNAs (with 1 or more amino acids incorporated), which drop off the ribosome during protein synthesis, or as a result of ribosome stalling. Catalyzes the release of premature peptidyl moieties from peptidyl-tRNA molecules trapped in stalled 50S ribosomal subunits, and thus maintains levels of free tRNAs and 50S ribosomes. In Pelagibacter ubique (strain HTCC1062), this protein is Peptidyl-tRNA hydrolase.